Consider the following 212-residue polypeptide: Ras-like protein (212 aa).

15-22 (GGGGVGKS) is a GTP binding site. The short motif at 37–45 (YDPTIEDSY) is the Effector region element. Residues 62–66 (DTAGQ) and 121–124 (NKCD) each bind GTP. 2 S-palmitoyl cysteine lipidation sites follow: cysteine 205 and cysteine 206. At cysteine 209 the chain carries Cysteine methyl ester. Cysteine 209 carries S-geranylgeranyl cysteine lipidation. Residues 210–212 (IVM) constitute a propeptide, removed in mature form.

It belongs to the small GTPase superfamily. Ras family.

Its subcellular location is the cell membrane. The catalysed reaction is GTP + H2O = GDP + phosphate + H(+). With respect to regulation, alternates between an inactive form bound to GDP and an active form bound to GTP. Activated by a guanine nucleotide-exchange factor (GEF) and inactivated by a GTPase-activating protein (GAP). This Emericella nidulans (strain FGSC A4 / ATCC 38163 / CBS 112.46 / NRRL 194 / M139) (Aspergillus nidulans) protein is Ras-like protein (rasA).